Consider the following 130-residue polypeptide: UPF0251 protein Swol_2090 (130 aa).

Belongs to the UPF0251 family.

In Syntrophomonas wolfei subsp. wolfei (strain DSM 2245B / Goettingen), this protein is UPF0251 protein Swol_2090.